Reading from the N-terminus, the 423-residue chain is Protein FAM43A (423 aa).

The span at 263-283 (EQELQEEEEEEQPEGCPEEEE) shows a compositional bias: acidic residues. Disordered regions lie at residues 263-298 (EQEL…EAEA), 321-344 (RGEA…LLLG), and 382-423 (LSGD…PHSG). Residues 323–335 (EALGGGGGSLGPG) show a composition bias toward gly residues. The span at 383-393 (SGDSTGSESSI) shows a compositional bias: low complexity. Polar residues predominate over residues 401-411 (TSATAGDSSRQ).

The protein belongs to the FAM43 family.

This chain is Protein FAM43A (FAM43A), found in Homo sapiens (Human).